Consider the following 517-residue polypeptide: uncharacterized protein (517 aa).

The next 10 helical transmembrane spans lie at 35–55 (FSLI…IPGI), 81–101 (IAIY…GVFN), 102–122 (IGIS…ILKV), 135–155 (IITI…VAAL), 164–184 (VVSA…LVGT), 223–243 (LVIA…TVFG), 268–288 (FLSF…VYTA), 302–322 (FGIT…LIAL), 328–348 (IVIV…AGLN), and 352–372 (ASLV…MIYI).

The protein localises to the cell membrane. This is an uncharacterized protein from Mycoplasma pneumoniae (strain ATCC 29342 / M129 / Subtype 1) (Mycoplasmoides pneumoniae).